The following is a 392-amino-acid chain: Iripin-4 (392 aa).

The first 16 residues, 1–16 (MRSLATFMSLLTICWG), serve as a signal peptide directing secretion. Residues N104, N130, and N265 are each glycosylated (N-linked (GlcNAc...) asparagine).

This sequence belongs to the serpin family. Female salivary gland.

It is found in the secreted. Its function is as follows. Serpin with unknown function. Weakly inhibits human granzyme B (GZMB). Acts as a substrate for porcine elastase. The chain is Iripin-4 from Ixodes ricinus (Common tick).